The chain runs to 589 residues: Cell fusion protein aff-1 (589 aa).

Positions 1-20 (MRLWQWSIAVAICLVMVTEA) are cleaved as a signal peptide. The Extracellular segment spans residues 21–537 (RLRRHHRKRR…MAHGGDFTEW (517 aa)). N-linked (GlcNAc...) asparagine glycans are attached at residues N58, N138, N205, N335, N382, N392, and N408. A helical membrane pass occupies residues 538 to 558 (LKIGIHIVIAVGLLLLLILLF). At 559-589 (TKCLVPLACCSLSIPFKNRNKKKKKKNSSDY) the chain is on the cytoplasmic side.

The protein belongs to the EFF/AFF cell fusogen family. Expressed in amphid sheath cells.

The protein resides in the cell membrane. Its subcellular location is the apical cell membrane. In terms of biological role, required for cell fusion events during development including the fusion of anchor cells (AC), vulval A and vulval D rings, and late epidermal seam cells. Required for amphid sheath cell fusion induced by entry into dauer stage. This chain is Cell fusion protein aff-1, found in Caenorhabditis elegans.